The chain runs to 217 residues: 3-dehydroquinate dehydratase (217 aa).

Residues 26-28 (EFR) and arginine 59 contribute to the 3-dehydroquinate site. Histidine 114 (proton donor/acceptor) is an active-site residue. Lysine 140 acts as the Schiff-base intermediate with substrate in catalysis. 3-dehydroquinate-binding residues include arginine 178 and glutamine 201.

The protein belongs to the type-I 3-dehydroquinase family. In terms of assembly, homodimer.

The enzyme catalyses 3-dehydroquinate = 3-dehydroshikimate + H2O. The protein operates within metabolic intermediate biosynthesis; chorismate biosynthesis; chorismate from D-erythrose 4-phosphate and phosphoenolpyruvate: step 3/7. In terms of biological role, involved in the third step of the chorismate pathway, which leads to the biosynthesis of aromatic amino acids. Catalyzes the cis-dehydration of 3-dehydroquinate (DHQ) and introduces the first double bond of the aromatic ring to yield 3-dehydroshikimate. The polypeptide is 3-dehydroquinate dehydratase (Hydrogenobaculum sp. (strain Y04AAS1)).